A 72-amino-acid polypeptide reads, in one-letter code: Translation initiation factor IF-1 (72 aa).

Residues M1–R72 enclose the S1-like domain.

It belongs to the IF-1 family. Component of the 30S ribosomal translation pre-initiation complex which assembles on the 30S ribosome in the order IF-2 and IF-3, IF-1 and N-formylmethionyl-tRNA(fMet); mRNA recruitment can occur at any time during PIC assembly.

It localises to the cytoplasm. Its function is as follows. One of the essential components for the initiation of protein synthesis. Stabilizes the binding of IF-2 and IF-3 on the 30S subunit to which N-formylmethionyl-tRNA(fMet) subsequently binds. Helps modulate mRNA selection, yielding the 30S pre-initiation complex (PIC). Upon addition of the 50S ribosomal subunit IF-1, IF-2 and IF-3 are released leaving the mature 70S translation initiation complex. This Shewanella amazonensis (strain ATCC BAA-1098 / SB2B) protein is Translation initiation factor IF-1.